Reading from the N-terminus, the 275-residue chain is Polyamine aminopropyltransferase (275 aa).

Residues E2–K235 form the PABS domain. Q31 lines the S-methyl-5'-thioadenosine pocket. Spermidine contacts are provided by H62 and D86. S-methyl-5'-thioadenosine contacts are provided by residues E106 and D137–G138. Residue D155 is the Proton acceptor of the active site. D155–E158 serves as a coordination point for spermidine. P162 contacts S-methyl-5'-thioadenosine.

It belongs to the spermidine/spermine synthase family. In terms of assembly, homodimer or homotetramer.

It is found in the cytoplasm. The catalysed reaction is S-adenosyl 3-(methylsulfanyl)propylamine + putrescine = S-methyl-5'-thioadenosine + spermidine + H(+). Its pathway is amine and polyamine biosynthesis; spermidine biosynthesis; spermidine from putrescine: step 1/1. Its function is as follows. Catalyzes the irreversible transfer of a propylamine group from the amino donor S-adenosylmethioninamine (decarboxy-AdoMet) to putrescine (1,4-diaminobutane) to yield spermidine. The protein is Polyamine aminopropyltransferase of Bacillus cytotoxicus (strain DSM 22905 / CIP 110041 / 391-98 / NVH 391-98).